The following is a 76-amino-acid chain: MVRQFKRRRYCRFTAEDVKEIDYKDLDTLREYVSETGKIVPSRITGTSAKYQRQLATAIKRARFLALLPFCDAHEQ.

It belongs to the bacterial ribosomal protein bS18 family. As to quaternary structure, part of the 30S ribosomal subunit. Forms a tight heterodimer with protein bS6.

Its function is as follows. Binds as a heterodimer with protein bS6 to the central domain of the 16S rRNA, where it helps stabilize the platform of the 30S subunit. This Methylococcus capsulatus (strain ATCC 33009 / NCIMB 11132 / Bath) protein is Small ribosomal subunit protein bS18.